We begin with the raw amino-acid sequence, 138 residues long: Ribosome-binding factor A (138 aa).

This sequence belongs to the RbfA family. As to quaternary structure, monomer. Binds 30S ribosomal subunits, but not 50S ribosomal subunits or 70S ribosomes.

It localises to the cytoplasm. In terms of biological role, one of several proteins that assist in the late maturation steps of the functional core of the 30S ribosomal subunit. Associates with free 30S ribosomal subunits (but not with 30S subunits that are part of 70S ribosomes or polysomes). Required for efficient processing of 16S rRNA. May interact with the 5'-terminal helix region of 16S rRNA. In Chromobacterium violaceum (strain ATCC 12472 / DSM 30191 / JCM 1249 / CCUG 213 / NBRC 12614 / NCIMB 9131 / NCTC 9757 / MK), this protein is Ribosome-binding factor A.